A 238-amino-acid chain; its full sequence is tRNA (guanine-N(1)-)-methyltransferase (238 aa).

S-adenosyl-L-methionine contacts are provided by residues Gly109 and 129-134 (IGDFVL).

Belongs to the RNA methyltransferase TrmD family. In terms of assembly, homodimer.

It localises to the cytoplasm. It carries out the reaction guanosine(37) in tRNA + S-adenosyl-L-methionine = N(1)-methylguanosine(37) in tRNA + S-adenosyl-L-homocysteine + H(+). Its function is as follows. Specifically methylates guanosine-37 in various tRNAs. The sequence is that of tRNA (guanine-N(1)-)-methyltransferase from Exiguobacterium sp. (strain ATCC BAA-1283 / AT1b).